The sequence spans 405 residues: L-carnitine CoA-transferase (405 aa).

CoA contacts are provided by Lys-97 and Arg-104. The active-site Nucleophile is Asp-169.

It belongs to the CoA-transferase III family. CaiB subfamily. As to quaternary structure, homodimer.

The protein resides in the cytoplasm. It catalyses the reaction crotonobetainyl-CoA + (R)-carnitine = crotonobetaine + (R)-carnitinyl-CoA. It carries out the reaction 4-(trimethylamino)butanoyl-CoA + (R)-carnitine = (R)-carnitinyl-CoA + 4-(trimethylamino)butanoate. Its pathway is amine and polyamine metabolism; carnitine metabolism. Its function is as follows. Catalyzes the reversible transfer of the CoA moiety from gamma-butyrobetainyl-CoA to L-carnitine to generate L-carnitinyl-CoA and gamma-butyrobetaine. Is also able to catalyze the reversible transfer of the CoA moiety from gamma-butyrobetainyl-CoA or L-carnitinyl-CoA to crotonobetaine to generate crotonobetainyl-CoA. This Escherichia fergusonii (strain ATCC 35469 / DSM 13698 / CCUG 18766 / IAM 14443 / JCM 21226 / LMG 7866 / NBRC 102419 / NCTC 12128 / CDC 0568-73) protein is L-carnitine CoA-transferase.